A 775-amino-acid polypeptide reads, in one-letter code: Melanoma-associated antigen D1 (775 aa).

The disordered stretch occupies residues S37 to Q330. Positions A39–S50 are enriched in low complexity. 7 stretches are compositionally biased toward polar residues: residues P52–T63, K84–R100, K107–T120, G149–K178, A221–S235, V247–G258, and L296–T308. 19 consecutive repeat copies span residues W292–A297, W298–G303, W304–A309, W329–A334, W335–I340, W341–I346, W347–I352, W353–V358, W359–V364, W365–A370, W371–G376, W377–S382, W383–S388, W389–D394, W395–D400, W401–D406, W407–D412, W413–D418, and W419–D424. Residues W292–P441 are 22 X 6 AA tandem repeats of W-[PQ]-X-P-X-X. Over residues A309–P326 the composition is skewed to low complexity. The tract at residues T374 to M409 is disordered. Over residues P375–D406 the composition is skewed to low complexity. A 20; approximate repeat occupies W425–D429. A run of 2 repeats spans residues W430–D435 and W436–P441. Residues Q437 to R452 show a composition bias toward low complexity. The interval Q437 to R463 is disordered. Positions L468–A666 constitute an MAGE domain.

In terms of assembly, interacts with DLX5, DLX7 and MSX2 and forms homomultimers. Interacts with UNC5A. Interacts with TRIM28 and PJA1. Interacts with NGFR/p75NTR and RORA. As to expression, ubiquitously expressed in many adult tissues, except for the spleen. Expressed in osteoblastic and chondrogenic cell lines and also during embryonic development.

It localises to the nucleus. The protein localises to the cytoplasm. Its subcellular location is the cell membrane. Functionally, involved in the apoptotic response after nerve growth factor (NGF) binding in neuronal cells. Inhibits cell cycle progression, and facilitates NGFR-mediated apoptosis. May act as a regulator of the function of DLX family members. May enhance ubiquitin ligase activity of RING-type zinc finger-containing E3 ubiquitin-protein ligases. Proposed to act through recruitment and/or stabilization of the Ubl-conjugating enzyme (E2) at the E3:substrate complex. Plays a role in the circadian rhythm regulation. May act as RORA coregulator, modulating the expression of core clock genes such as BMAL1 and NFIL3, induced, or NR1D1, repressed. This is Melanoma-associated antigen D1 (Maged1) from Mus musculus (Mouse).